The following is an 81-amino-acid chain: Exodeoxyribonuclease 7 small subunit (81 aa).

Belongs to the XseB family. In terms of assembly, heterooligomer composed of large and small subunits.

It localises to the cytoplasm. The enzyme catalyses Exonucleolytic cleavage in either 5'- to 3'- or 3'- to 5'-direction to yield nucleoside 5'-phosphates.. In terms of biological role, bidirectionally degrades single-stranded DNA into large acid-insoluble oligonucleotides, which are then degraded further into small acid-soluble oligonucleotides. This Ruegeria sp. (strain TM1040) (Silicibacter sp.) protein is Exodeoxyribonuclease 7 small subunit.